We begin with the raw amino-acid sequence, 283 residues long: MQVILAKHAGFCFGVKRATQLAFEAADTGSETYTLGPIIHSPQVVQRLEEMGVIPVEDVSEVETGGTIIIRSHGVAAEELEAAVRANLEVVDATCPFVKKAQEHVATLSKEGYDIVVVGDAVHPEVQGIVSYAAGRVYVVSSDKDVERLPRMSKIGIVAQTTQSFEHLHDVVTACLARGGETRVYNTICDATAVRQDEAKKLAGAVDCMVVIGGFNSANTKRLAQICRELLPRTHHVETACQIDEQWFKGVEKVGVTAGASTPKWIIDEVIDRISAIDKDKIS.

Cys12 is a binding site for [4Fe-4S] cluster. The (2E)-4-hydroxy-3-methylbut-2-enyl diphosphate site is built by His40 and His73. Residues His40 and His73 each contribute to the dimethylallyl diphosphate site. The isopentenyl diphosphate site is built by His40 and His73. Cys95 provides a ligand contact to [4Fe-4S] cluster. Residue His123 coordinates (2E)-4-hydroxy-3-methylbut-2-enyl diphosphate. His123 serves as a coordination point for dimethylallyl diphosphate. His123 is a binding site for isopentenyl diphosphate. Glu125 functions as the Proton donor in the catalytic mechanism. Thr161 contacts (2E)-4-hydroxy-3-methylbut-2-enyl diphosphate. [4Fe-4S] cluster is bound at residue Cys189. Residues Ser217, Asn219, and Ser261 each coordinate (2E)-4-hydroxy-3-methylbut-2-enyl diphosphate. Dimethylallyl diphosphate is bound by residues Ser217, Asn219, and Ser261. Residues Ser217, Asn219, and Ser261 each contribute to the isopentenyl diphosphate site.

Belongs to the IspH family. [4Fe-4S] cluster serves as cofactor.

It carries out the reaction isopentenyl diphosphate + 2 oxidized [2Fe-2S]-[ferredoxin] + H2O = (2E)-4-hydroxy-3-methylbut-2-enyl diphosphate + 2 reduced [2Fe-2S]-[ferredoxin] + 2 H(+). The catalysed reaction is dimethylallyl diphosphate + 2 oxidized [2Fe-2S]-[ferredoxin] + H2O = (2E)-4-hydroxy-3-methylbut-2-enyl diphosphate + 2 reduced [2Fe-2S]-[ferredoxin] + 2 H(+). The protein operates within isoprenoid biosynthesis; dimethylallyl diphosphate biosynthesis; dimethylallyl diphosphate from (2E)-4-hydroxy-3-methylbutenyl diphosphate: step 1/1. It functions in the pathway isoprenoid biosynthesis; isopentenyl diphosphate biosynthesis via DXP pathway; isopentenyl diphosphate from 1-deoxy-D-xylulose 5-phosphate: step 6/6. In terms of biological role, catalyzes the conversion of 1-hydroxy-2-methyl-2-(E)-butenyl 4-diphosphate (HMBPP) into a mixture of isopentenyl diphosphate (IPP) and dimethylallyl diphosphate (DMAPP). Acts in the terminal step of the DOXP/MEP pathway for isoprenoid precursor biosynthesis. This chain is 4-hydroxy-3-methylbut-2-enyl diphosphate reductase, found in Geobacter sp. (strain M21).